A 55-amino-acid chain; its full sequence is Protein CADMIUM TOLERANCE 1 (55 aa).

Residues G24–Y40 traverse the membrane as a helical segment.

This sequence belongs to the CYSTM1 family.

Its subcellular location is the cell membrane. It is found in the secreted. It localises to the cell wall. Functionally, confers resistance to heavy metal ions (e.g. cadmium (CdCl(2)) and copper (CuCl(2))) by chelating them at the plasma membrane of root cells, thus stopping their entry and reducing their accumulation. This chain is Protein CADMIUM TOLERANCE 1, found in Digitaria ciliaris (Southern crabgrass).